A 236-amino-acid polypeptide reads, in one-letter code: Ribose-5-phosphate isomerase A (236 aa).

Substrate-binding positions include 28 to 31 (TGST), 83 to 86 (DGAD), and 96 to 99 (KGGG). The Proton acceptor role is filled by Glu105. Lys123 contacts substrate.

Belongs to the ribose 5-phosphate isomerase family. Homodimer.

The catalysed reaction is aldehydo-D-ribose 5-phosphate = D-ribulose 5-phosphate. It participates in carbohydrate degradation; pentose phosphate pathway; D-ribose 5-phosphate from D-ribulose 5-phosphate (non-oxidative stage): step 1/1. Functionally, catalyzes the reversible conversion of ribose-5-phosphate to ribulose 5-phosphate. The polypeptide is Ribose-5-phosphate isomerase A (Methylorubrum populi (strain ATCC BAA-705 / NCIMB 13946 / BJ001) (Methylobacterium populi)).